The following is a 282-amino-acid chain: Bifunctional protein FolD (282 aa).

NADP(+)-binding positions include 163-165 (NRS), T188, and I229.

It belongs to the tetrahydrofolate dehydrogenase/cyclohydrolase family. Homodimer.

The enzyme catalyses (6R)-5,10-methylene-5,6,7,8-tetrahydrofolate + NADP(+) = (6R)-5,10-methenyltetrahydrofolate + NADPH. It catalyses the reaction (6R)-5,10-methenyltetrahydrofolate + H2O = (6R)-10-formyltetrahydrofolate + H(+). It functions in the pathway one-carbon metabolism; tetrahydrofolate interconversion. In terms of biological role, catalyzes the oxidation of 5,10-methylenetetrahydrofolate to 5,10-methenyltetrahydrofolate and then the hydrolysis of 5,10-methenyltetrahydrofolate to 10-formyltetrahydrofolate. The sequence is that of Bifunctional protein FolD from Malacoplasma penetrans (strain HF-2) (Mycoplasma penetrans).